Consider the following 334-residue polypeptide: Putative heme-binding peroxidase (334 aa).

Residue His-40 is the Proton acceptor of the active site. His-169 contributes to the heme b binding site. The Tryptophan radical intermediate role is filled by Trp-185.

It belongs to the peroxidase family. Cytochrome c peroxidase subfamily. Requires heme b as cofactor.

In terms of biological role, destroys radicals which are normally produced within the cells and which are toxic to biological systems. The chain is Putative heme-binding peroxidase from Cryptococcus neoformans var. neoformans serotype D (strain JEC21 / ATCC MYA-565) (Filobasidiella neoformans).